Reading from the N-terminus, the 232-residue chain is 2,3,4,5-tetrahydropyridine-2,6-dicarboxylate N-acetyltransferase (232 aa).

Belongs to the transferase hexapeptide repeat family. DapH subfamily.

The catalysed reaction is (S)-2,3,4,5-tetrahydrodipicolinate + acetyl-CoA + H2O = L-2-acetamido-6-oxoheptanedioate + CoA. It participates in amino-acid biosynthesis; L-lysine biosynthesis via DAP pathway; LL-2,6-diaminopimelate from (S)-tetrahydrodipicolinate (acetylase route): step 1/3. Catalyzes the transfer of an acetyl group from acetyl-CoA to tetrahydrodipicolinate. This chain is 2,3,4,5-tetrahydropyridine-2,6-dicarboxylate N-acetyltransferase, found in Streptococcus gordonii (strain Challis / ATCC 35105 / BCRC 15272 / CH1 / DL1 / V288).